The sequence spans 119 residues: Methylglyoxal synthase (119 aa).

Positions 1–119 constitute an MGS-like domain; sequence MRIALIAHDK…GTADLIIKQF (119 aa). Substrate is bound by residues H8, K12, 34–37, and 54–55; these read TGTT and SG. The Proton donor/acceptor role is filled by D60. H87 serves as a coordination point for substrate.

Belongs to the methylglyoxal synthase family.

The enzyme catalyses dihydroxyacetone phosphate = methylglyoxal + phosphate. Functionally, catalyzes the formation of methylglyoxal from dihydroxyacetone phosphate. The polypeptide is Methylglyoxal synthase (Clostridium botulinum (strain Eklund 17B / Type B)).